We begin with the raw amino-acid sequence, 65 residues long: Large ribosomal subunit protein bL35 (65 aa).

Residues 1 to 21 (MPKMKTKSGAAKRFTVRAGGT) are disordered.

Belongs to the bacterial ribosomal protein bL35 family.

The chain is Large ribosomal subunit protein bL35 from Nitrosospira multiformis (strain ATCC 25196 / NCIMB 11849 / C 71).